The following is a 475-amino-acid chain: Glycogen synthase (475 aa).

Residue Lys15 participates in ADP-alpha-D-glucose binding.

It belongs to the glycosyltransferase 1 family. Bacterial/plant glycogen synthase subfamily.

The catalysed reaction is [(1-&gt;4)-alpha-D-glucosyl](n) + ADP-alpha-D-glucose = [(1-&gt;4)-alpha-D-glucosyl](n+1) + ADP + H(+). The protein operates within glycan biosynthesis; glycogen biosynthesis. In terms of biological role, synthesizes alpha-1,4-glucan chains using ADP-glucose. This chain is Glycogen synthase, found in Anaeromyxobacter sp. (strain K).